The chain runs to 150 residues: D-aminoacyl-tRNA deacylase (150 aa).

The Gly-cisPro motif, important for rejection of L-amino acids motif lies at 136–137; that stretch reads GP.

It belongs to the DTD family. As to quaternary structure, homodimer.

It localises to the cytoplasm. The enzyme catalyses glycyl-tRNA(Ala) + H2O = tRNA(Ala) + glycine + H(+). It catalyses the reaction a D-aminoacyl-tRNA + H2O = a tRNA + a D-alpha-amino acid + H(+). Its function is as follows. An aminoacyl-tRNA editing enzyme that deacylates mischarged D-aminoacyl-tRNAs. Also deacylates mischarged glycyl-tRNA(Ala), protecting cells against glycine mischarging by AlaRS. Acts via tRNA-based rather than protein-based catalysis; rejects L-amino acids rather than detecting D-amino acids in the active site. By recycling D-aminoacyl-tRNA to D-amino acids and free tRNA molecules, this enzyme counteracts the toxicity associated with the formation of D-aminoacyl-tRNA entities in vivo and helps enforce protein L-homochirality. The chain is D-aminoacyl-tRNA deacylase from Staphylococcus saprophyticus subsp. saprophyticus (strain ATCC 15305 / DSM 20229 / NCIMB 8711 / NCTC 7292 / S-41).